The chain runs to 368 residues: D-alanine--D-alanine ligase (368 aa).

An ATP-grasp domain is found at 151-358 (KKLLAAEGLP…YGTLVSTLVD (208 aa)). An ATP-binding site is contributed by 179 to 234 (KSRLHLPVFVKPARGGSSIGITRVAEWAALDDAIAHARLHDPKVIVESGIIGREVE). Asp313, Glu325, and Asn327 together coordinate Mg(2+).

It belongs to the D-alanine--D-alanine ligase family. The cofactor is Mg(2+). It depends on Mn(2+) as a cofactor.

It is found in the cytoplasm. The enzyme catalyses 2 D-alanine + ATP = D-alanyl-D-alanine + ADP + phosphate + H(+). It participates in cell wall biogenesis; peptidoglycan biosynthesis. Its function is as follows. Cell wall formation. This chain is D-alanine--D-alanine ligase, found in Rhodococcus jostii (strain RHA1).